We begin with the raw amino-acid sequence, 330 residues long: Beta-ketoacyl-[acyl-carrier-protein] synthase III (330 aa).

Residues Cys-116 and His-257 contribute to the active site. The ACP-binding stretch occupies residues 258–262 (QANQR). Asn-287 is a catalytic residue.

It belongs to the thiolase-like superfamily. FabH family. In terms of assembly, homodimer.

The protein localises to the cytoplasm. The enzyme catalyses malonyl-[ACP] + acetyl-CoA + H(+) = 3-oxobutanoyl-[ACP] + CO2 + CoA. Its pathway is lipid metabolism; fatty acid biosynthesis. Catalyzes the condensation reaction of fatty acid synthesis by the addition to an acyl acceptor of two carbons from malonyl-ACP. Catalyzes the first condensation reaction which initiates fatty acid synthesis and may therefore play a role in governing the total rate of fatty acid production. Possesses both acetoacetyl-ACP synthase and acetyl transacylase activities. Its substrate specificity determines the biosynthesis of branched-chain and/or straight-chain of fatty acids. This Synechocystis sp. (strain ATCC 27184 / PCC 6803 / Kazusa) protein is Beta-ketoacyl-[acyl-carrier-protein] synthase III.